We begin with the raw amino-acid sequence, 529 residues long: tRNA pseudouridine synthase Pus10 (529 aa).

Zn(2+) contacts are provided by cysteine 21 and cysteine 24. A coiled-coil region spans residues 42-89; the sequence is KELLNELQKFLETEKDELILEVMNPPPKKIRLQELEDSIDNLSQNGEG. 2 positions are modified to phosphoserine: serine 79 and serine 84. Residues cysteine 109 and cysteine 112 each coordinate Zn(2+). The interval 304-317 is RNA binding forefinger loop; sequence TPWIIDGERKLESS. The active-site Nucleophile is the aspartate 344. Residues 442 to 457 form an RNA binding thumb loop region; it reads QKTPLRVLHRRPLAVR.

This sequence belongs to the pseudouridine synthase Pus10 family. Interacts with components of the microprocessor complex DROSHA and DGCR8. Post-translationally, proteolytically cleaved during TRAIL-induced cell death. Cleaved, in vitro, either by caspase-3 (CASP3) or caspase-8 (CASP8).

It is found in the nucleus. The protein localises to the cytoplasm. It localises to the mitochondrion. The enzyme catalyses uridine(55) in tRNA = pseudouridine(55) in tRNA. It catalyses the reaction uridine(54) in tRNA = pseudouridine(54) in tRNA. Its function is as follows. Protein with different functions depending on its subcellular location: involved in miRNA processing in the nucleus and acts as a tRNA pseudouridylate synthase in the cytoplasm. In the cytoplasm, acts as a pseudouridylate synthase by catalyzing synthesis of pseudouridine(54) and pseudouridine(55) from uracil-54 and uracil-55, respectively, in the psi GC loop of a subset of tRNAs. tRNA pseudouridylate synthase activity is enhanced by the presence of 1-methyladenosine at position 53-61 of tRNAs. Does not show tRNA pseudouridylate synthase activity in the nucleus. In the nucleus, promotes primary microRNAs (pri-miRNAs) processing independently of its RNA pseudouridylate synthase activity. Binds pri-miRNAs. Modulator of TRAIL/TNFSF10-induced cell death via activation of procaspase-8 and BID cleavage. Required for the progression of the apoptotic signal through intrinsic mitochondrial cell death. This Homo sapiens (Human) protein is tRNA pseudouridine synthase Pus10.